Consider the following 205-residue polypeptide: High frequency lysogenization protein HflD homolog (205 aa).

The protein belongs to the HflD family.

The protein resides in the cytoplasm. It is found in the cell inner membrane. This is High frequency lysogenization protein HflD homolog from Aliivibrio fischeri (strain MJ11) (Vibrio fischeri).